A 94-amino-acid polypeptide reads, in one-letter code: Mitochondrial import receptor subunit TOM9-1 (94 aa).

Topologically, residues 1–48 (MAPKKIGAGKGDSSILAKISNYDIVSQGRRAACDAVYVSKKLLKSTGK) are cytoplasmic. The chain crosses the membrane as a helical span at residues 49–66 (AAWIAGTTFLILAVPLIL). The Mitochondrial intermembrane portion of the chain corresponds to 67-94 (ELEQDHRLGEIDFEQASLLGTPPVGAML).

This sequence belongs to the Tom22 family. Forms part of the preprotein translocase complex of the outer mitochondrial membrane (TOM complex) which consists of at least 6 different proteins (TOM5, TOM6, TOM7, TOM20, TOM22/TOM9 and TOM40). In terms of tissue distribution, expressed in roots, flowers, young cotyledons and leaves.

It localises to the mitochondrion outer membrane. Functionally, central component of the receptor complex responsible for the recognition and translocation of cytosolically synthesized mitochondrial preproteins. Together with TOM20 functions as the transit peptide receptor at the surface of the mitochondrion outer membrane and facilitates the movement of preproteins into the translocation pore. The protein is Mitochondrial import receptor subunit TOM9-1 (TOM9-1) of Arabidopsis thaliana (Mouse-ear cress).